A 467-amino-acid chain; its full sequence is 3-isopropylmalate dehydratase large subunit (467 aa).

Positions 348, 409, and 412 each coordinate [4Fe-4S] cluster.

This sequence belongs to the aconitase/IPM isomerase family. LeuC type 1 subfamily. In terms of assembly, heterodimer of LeuC and LeuD. The cofactor is [4Fe-4S] cluster.

The catalysed reaction is (2R,3S)-3-isopropylmalate = (2S)-2-isopropylmalate. The protein operates within amino-acid biosynthesis; L-leucine biosynthesis; L-leucine from 3-methyl-2-oxobutanoate: step 2/4. Its function is as follows. Catalyzes the isomerization between 2-isopropylmalate and 3-isopropylmalate, via the formation of 2-isopropylmaleate. The chain is 3-isopropylmalate dehydratase large subunit from Thiobacillus denitrificans (strain ATCC 25259 / T1).